The following is a 327-amino-acid chain: Neurogenic differentiation factor 6-A (327 aa).

Residues 17 to 85 (GANFPRDCVG…KKMTKARVDR (69 aa)) form a disordered region. Over residues 24–46 (CVGDLKGNKQEPFEKEETLSHVM) the composition is skewed to basic and acidic residues. The span at 47–63 (DDDDSEKDEDEREDGQD) shows a compositional bias: acidic residues. Residues 68–80 (PRRRGPRKKKMTK) are compositionally biased toward basic residues. A Nuclear localization signal motif is present at residues 74-80 (RKKKMTK). The 53-residue stretch at 88–140 (VRRMEANARERNRMHGLNNALDSLRKVVPCYSKTQKLSKIETLRLAKNYIWAL) folds into the bHLH domain.

As to quaternary structure, efficient DNA binding requires dimerization with another bHLH protein. As to expression, embryonic olfactory bulbs. In adult, expressed in brain, eye, intestine, muscle, ovary and skin.

It is found in the nucleus. Its function is as follows. Differentiation factor required for neurogenesis. Acts as an upstream activator of isl1. This Danio rerio (Zebrafish) protein is Neurogenic differentiation factor 6-A.